A 322-amino-acid chain; its full sequence is Eukaryotic translation initiation factor 3 subunit I (322 aa).

WD repeat units lie at residues 4 to 43, 46 to 85, 141 to 180, 184 to 223, and 281 to 322; these read GHER…RLGT, GHQG…IIAS, MTES…KVVD, DHTA…CLKT, and GHFG…NIFE.

It belongs to the eIF-3 subunit I family. In terms of assembly, component of the eukaryotic translation initiation factor 3 (eIF-3) complex. The eIF-3 complex interacts with pix.

It is found in the cytoplasm. Functionally, component of the eukaryotic translation initiation factor 3 (eIF-3) complex, which is involved in protein synthesis of a specialized repertoire of mRNAs and, together with other initiation factors, stimulates binding of mRNA and methionyl-tRNAi to the 40S ribosome. The eIF-3 complex specifically targets and initiates translation of a subset of mRNAs involved in cell proliferation. This Drosophila ananassae (Fruit fly) protein is Eukaryotic translation initiation factor 3 subunit I.